Here is a 356-residue protein sequence, read N- to C-terminus: Golgi-resident adenosine 3',5'-bisphosphate 3'-phosphatase (356 aa).

Methionine 1 is modified (N-acetylmethionine). The Cytoplasmic portion of the chain corresponds to 1-12; the sequence is MAPMGIRLSPLG. Residues 13-33 form a helical membrane-spanning segment; the sequence is VAVFFLLGLGVLYHLYSGFLA. Residues 34–356 are Lumenal-facing; it reads GRFSLFGLGG…KLPDLEKSGH (323 aa). Residues 82–104 form a disordered region; that stretch reads VRESNVLHEKSKGKTREGAEDKM. The active-site Proton acceptor is the aspartate 108. Mg(2+)-binding residues include glutamate 131, aspartate 172, leucine 174, and aspartate 175. Threonine 177 acts as the Proton acceptor in catalysis. Serine 240 and histidine 243 together coordinate AMP. Asparagine 257 carries N-linked (GlcNAc...) asparagine glycosylation. Positions 266 and 270 each coordinate AMP. Aspartate 298 lines the Mg(2+) pocket.

It belongs to the inositol monophosphatase superfamily. Requires Mg(2+) as cofactor. In terms of processing, contains N-linked glycan resistant to endoglycosydase H.

It localises to the golgi apparatus. It is found in the trans-Golgi network membrane. The enzyme catalyses adenosine 3',5'-bisphosphate + H2O = AMP + phosphate. Its pathway is sulfur metabolism. Its activity is regulated as follows. Strongly inhibited by lithium. Its function is as follows. Exhibits 3'-nucleotidase activity toward adenosine 3',5'-bisphosphate (PAP), namely hydrolyzes adenosine 3',5'-bisphosphate into adenosine 5'-monophosphate (AMP) and a phosphate. May play a role in the formation of skeletal elements derived through endochondral ossification, possibly by clearing adenosine 3',5'-bisphosphate produced by Golgi sulfotransferases during glycosaminoglycan sulfation. Has no activity toward 3'-phosphoadenosine 5'-phosphosulfate (PAPS) or inositol phosphate (IP) substrates including I(1)P, I(1,4)P2, I(1,3,4)P3, I(1,4,5)P3 and I(1,3,4,5)P4. In Rattus norvegicus (Rat), this protein is Golgi-resident adenosine 3',5'-bisphosphate 3'-phosphatase (Bpnt2).